The following is a 117-amino-acid chain: DNA-directed RNA polymerase subunit omega (117 aa).

This sequence belongs to the RNA polymerase subunit omega family. As to quaternary structure, the RNAP catalytic core consists of 2 alpha, 1 beta, 1 beta' and 1 omega subunit. When a sigma factor is associated with the core the holoenzyme is formed, which can initiate transcription.

The enzyme catalyses RNA(n) + a ribonucleoside 5'-triphosphate = RNA(n+1) + diphosphate. In terms of biological role, promotes RNA polymerase assembly. Latches the N- and C-terminal regions of the beta' subunit thereby facilitating its interaction with the beta and alpha subunits. This Jannaschia sp. (strain CCS1) protein is DNA-directed RNA polymerase subunit omega.